Here is a 284-residue protein sequence, read N- to C-terminus: Tropomyosin (284 aa).

The disordered stretch occupies residues 1–38; the sequence is MEAIKKKMQAMKLEKDNAVDRAETAEQQSREAALRAEK. Residues 1–284 adopt a coiled-coil conformation; that stretch reads MEAIKKKMQA…DQTFSELTGY (284 aa). Residues 12 to 38 show a composition bias toward basic and acidic residues; the sequence is KLEKDNAVDRAETAEQQSREAALRAEK.

Belongs to the tropomyosin family. As to quaternary structure, homodimer.

Tropomyosin, in association with the troponin complex, plays a central role in the calcium dependent regulation of muscle contraction. In Rhipicephalus microplus (Cattle tick), this protein is Tropomyosin.